The primary structure comprises 412 residues: Odorant receptor 47b (412 aa).

Residues 1–74 (MNDSGYQSNL…NLFIMCNVMT (74 aa)) are Cytoplasmic-facing. A helical membrane pass occupies residues 75–95 (IFWTMFVALPESKNVIEMGDD). Over 96–103 (LVWISGMA) the chain is Extracellular. A helical transmembrane segment spans residues 104 to 124 (LVFTKIFYMHLRCDEIDELIS). Over 125–169 (DFEYYNRELRPHNIDEEVLGWQRLCYVIESGLYINCFCLVNFFSA) the chain is Cytoplasmic. A helical transmembrane segment spans residues 170 to 190 (AIFLQPLLGEGKLPFHSVYPF). At 191–229 (QWHRLDLHPYTFWFLYIWQSLTSQHNLMSILMVDMVGIS) the chain is on the extracellular side. The chain crosses the membrane as a helical span at residues 230–250 (TFLQTALNLKLLCIEIRKLGD). At 251–302 (MEVSDKRFHEEFCRVVRFHQHIIKLVGKANRAFNGAFNAQLMASFSLISIST) the chain is on the cytoplasmic side. A helical membrane pass occupies residues 303–323 (FETMAAAAVDPKMAAKFVLLM). Over 324–330 (LVAFIQL) the chain is Extracellular. The helical transmembrane segment at 331–351 (SLWCVSGTLVYTQSVEVAQAA) threads the bilayer. The Cytoplasmic segment spans residues 352 to 389 (FDINDWHTKSPGIQRDISFVILRAQKPLMYVAEPFLPF). Residues 390–410 (TLGTYMLVLKNCYRLLALMQE) traverse the membrane as a helical segment. Topologically, residues 411–412 (SM) are extracellular.

It belongs to the insect chemoreceptor superfamily. Heteromeric odorant receptor channel (TC 1.A.69) family. Or49a subfamily. In terms of assembly, interacts with Orco. Complexes exist early in the endomembrane system in olfactory sensory neurons (OSNs), coupling these complexes to the conserved ciliary trafficking pathway. Expressed in olfactory sensory neurons in the antenna.

The protein resides in the cell membrane. Odorant receptor which mediates acceptance or avoidance behavior, depending on its substrates. The odorant receptor repertoire encodes a large collection of odor stimuli that vary widely in identity, intensity, and duration. May form a complex with Orco to form odorant-sensing units, providing sensitive and prolonged odorant signaling and calcium permeability. Plays an important role in sociosexual interactions since its enhances courtship in a pheromone-dependent manner. This Drosophila melanogaster (Fruit fly) protein is Odorant receptor 47b (Or47b).